A 606-amino-acid chain; its full sequence is MTDPNSKGSTSKEGFGDWCLLEADCSDVENDLGQLFERDTDSDISDLLDDTELEQGNSLELFHQQECEQSEEQLQKLKRKYLSPKAVAQLSPRLESISLSPQQKSKRRLFAEQDSGLELTLNNEAEDVTPEVEVPAIDSRPDDEGGSGDVDIHYTALLRSSNKKATLMAKFKESFGVGFNELTRQFKSHKTCCKDWVVSVYAVHDDLFESSKQLLQQHCDYIWVRGIGAMSLYLLCFKAGKNRGTVHKLITSMLNVHEQQILSEPPKLRNTAAALFWYKGCMGSGAFSHGPYPDWIAQQTILGHKSAEASTFDFSAMVQWAFHNHLLDEADIAYQYARLAPEDANAVAWLAHNNQAKFVRECAYMVRFYKKGQMRDMSISEWIYTKINEVEGEGHWSDIVKFIRYQNINFIVFLTALKEFLHSVPKKNCILIYGPPNSGKSSFAMSLIRVLKGRVLSFVNSKSQFWLQPLSECKIALLDDVTDPCWIYMDTYLRNGLDGHYVSLDCKYRAPTQMKFPPLLLTSNINVHGETNYRYLHTTIKGFEFPNPFPMKADNTPQFELTDQSWKSFFTRLWTQLDLSDQEEEGEDGESQRAFQCSARSANEHL.

A Nuclear localization signal motif is present at residues 78 to 80 (KRK). S83 and S91 each carry phosphoserine; by host. Positions 90-99 (LSPRLESISL) match the Nuclear export signal motif. Residues 146-309 (GSGDVDIHYT…TILGHKSAEA (164 aa)) are DNA-binding region. An SF3 helicase domain is found at 408–558 (INFIVFLTAL…FPMKADNTPQ (151 aa)). An ATP-binding site is contributed by 434 to 441 (GPPNSGKS). A Glycyl lysine isopeptide (Lys-Gly) (interchain with G-Cter in SUMO) cross-link involves residue K515. The segment at 581–606 (DQEEEGEDGESQRAFQCSARSANEHL) is disordered. Polar residues predominate over residues 593–606 (RAFQCSARSANEHL).

The protein belongs to the papillomaviridae E1 protein family. As to quaternary structure, can form hexamers. Interacts with E2 protein; this interaction increases E1 DNA binding specificity. Interacts with host DNA polymerase subunit POLA2. Interacts with host single stranded DNA-binding protein RPA1. Interacts with host TOP1; this interaction stimulates the enzymatic activity of TOP1. Post-translationally, phosphorylated. Sumoylated.

The protein resides in the host nucleus. The catalysed reaction is Couples ATP hydrolysis with the unwinding of duplex DNA by translocating in the 3'-5' direction.. It catalyses the reaction ATP + H2O = ADP + phosphate + H(+). ATP-dependent DNA 3'-5' helicase required for initiation of viral DNA replication. It forms a complex with the viral E2 protein. The E1-E2 complex binds to the replication origin which contains binding sites for both proteins. During the initial step, a dimer of E1 interacts with a dimer of protein E2 leading to a complex that binds the viral origin of replication with high specificity. Then, a second dimer of E1 displaces the E2 dimer in an ATP-dependent manner to form the E1 tetramer. Following this, two E1 monomers are added to each half of the site, which results in the formation of two E1 trimers on the viral ori. Subsequently, two hexamers will be created. The double hexamer acts as a bi-directional helicase machinery and unwinds the viral DNA and then recruits the host DNA polymerase to start replication. The chain is Replication protein E1 from Human papillomavirus 5.